Consider the following 967-residue polypeptide: A disintegrin and metalloproteinase with thrombospondin motifs 1 (967 aa).

Disordered stretches follow at residues 1 to 27 and 192 to 250; these read MQRA…APGS and GDVG…SIRK. Positions 1–49 are cleaved as a signal peptide; it reads MQRAVPEGFGRRKLGSDMGNAERAPGSRSFGPVPTLLLLAAALLAVSDA. Positions 50-252 are excised as a propeptide; that stretch reads LGRPSEEDEE…TGTGSIRKKR (203 aa). Residues 196–203 carry the Cysteine switch motif; sequence GTCGVVDD. Cys198 contacts Zn(2+). Residues 203-212 are compositionally biased toward basic and acidic residues; that stretch reads DEPRPTGKAE. The span at 213–226 shows a compositional bias: acidic residues; the sequence is TEDEDEGTEGEDEG. In terms of domain architecture, Peptidase M12B spans 258–467; the sequence is RYVETMLVAD…GHGECLMDKP (210 aa). Glu261, Asp344, and Asp351 together coordinate Ca(2+). Disulfide bonds link Cys333-Cys385, Cys362-Cys367, Cys379-Cys462, and Cys417-Cys446. A Zn(2+)-binding site is contributed by His401. The active site involves Glu402. Positions 405 and 411 each coordinate Zn(2+). The Ca(2+) site is built by Cys462 and Asp465. Residues 476–559 form the Disintegrin domain; the sequence is DLPGTSYDAN…DRKHFDTPFH (84 aa). Disulfide bonds link Cys488-Cys511, Cys499-Cys521, Cys506-Cys540, and Cys534-Cys545. An N-linked (GlcNAc...) asparagine glycan is attached at Asn547. Residues 559 to 614 form the TSP type-1 1 domain; sequence HGSWGMWGPWGDCSRTCGGGVQYTMRECDNPVPKNGGKYCEGKRVRYRSCNLEDCP. 3 disulfides stabilise this stretch: Cys571–Cys608, Cys575–Cys613, and Cys586–Cys598. Asn720 and Asn764 each carry an N-linked (GlcNAc...) asparagine glycan. The interval 725 to 849 is spacer; sequence KKISGSVTSA…YFVKKKKESF (125 aa). TSP type-1 domains follow at residues 854-905 and 908-967; these read TFSA…RPCA and PCPQ…AECS.

It depends on Zn(2+) as a cofactor. The precursor is cleaved by a furin endopeptidase. Post-translationally, glycosylated. Can be O-fucosylated by POFUT2 on a serine or a threonine residue found within the consensus sequence C1-X(2)-(S/T)-C2-G of the TSP type-1 repeat domains where C1 and C2 are the first and second cysteine residue of the repeat, respectively. Fucosylated repeats can then be further glycosylated by the addition of a beta-1,3-glucose residue by the glucosyltransferase, B3GALTL. Fucosylation mediates the efficient secretion of ADAMTS family members. Can also be C-glycosylated with one or two mannose molecules on tryptophan residues within the consensus sequence W-X-X-W of the TPRs, and N-glycosylated. These other glycosylations can also facilitate secretion.

It is found in the secreted. Its subcellular location is the extracellular space. The protein resides in the extracellular matrix. Metalloprotease which cleaves aggrecan, a cartilage proteoglycan, at the '1938-Glu-|-Leu-1939' site (within the chondroitin sulfate attachment domain), and may be involved in its turnover. Also cleaves COMP. Has angiogenic inhibitor activity. May play a critical role in follicular rupture. This Homo sapiens (Human) protein is A disintegrin and metalloproteinase with thrombospondin motifs 1 (ADAMTS1).